A 178-amino-acid chain; its full sequence is Caveolin-1 (178 aa).

Serine 2 is modified (N-acetylserine). Serine 2 carries the post-translational modification Phosphoserine. Positions 2–94 (SGGKYVDSEG…WKASFTTFTV (93 aa)) are required for homooligomerization. Topologically, residues 2–104 (SGGKYVDSEG…TKYWFYRLLS (103 aa)) are cytoplasmic. Lysine 5 is subject to N6-acetyllysine; alternate. Residue lysine 5 forms a Glycyl lysine isopeptide (Lys-Gly) (interchain with G-Cter in ubiquitin); alternate linkage. Tyrosine 6 bears the Phosphotyrosine mark. Phosphoserine is present on serine 9. Tyrosine 14 carries the phosphotyrosine; by ABL1 modification. Tyrosine 25 bears the Phosphotyrosine mark. Residues lysine 26 and lysine 30 each participate in a glycyl lysine isopeptide (Lys-Gly) (interchain with G-Cter in ubiquitin) cross-link. At serine 37 the chain carries Phosphoserine. Glycyl lysine isopeptide (Lys-Gly) (interchain with G-Cter in ubiquitin) cross-links involve residues lysine 39, lysine 47, and lysine 57. Positions 82-94 (DGIWKASFTTFTV) are interaction with CAVIN3. The helical intramembrane region spans 105–125 (ALFGIPMALIWGIYFAILSFL). The Cytoplasmic portion of the chain corresponds to 126–178 (HIWAVVPCIKSFLIEIQCISRVYSIYVHTVCDPLFEAVGKIFSNVRINLQKEI). An interacts with SPRY1, SPRY2, SPRY3 and SPRY4 region spans residues 131–142 (VPCIKSFLIEIQ). Residues cysteine 133, cysteine 143, and cysteine 156 are each lipidated (S-palmitoyl cysteine). An interacts with SPRY1, SPRY2, and SPRY4 region spans residues 149-160 (SIYVHTVCDPLF). The interval 167 to 178 (FSNVRINLQKEI) is interacts with SPRY1, SPRY2, SPRY3 and SPRY4.

It belongs to the caveolin family. As to quaternary structure, homooligomer. Interacts with GLIPR2. Interacts with NOSTRIN. Interacts with SNAP25 and STX1A. Interacts (via the N-terminus) with DPP4; the interaction is direct. Interacts with CTNNB1, CDH1 and JUP. Interacts with PACSIN2; this interaction induces membrane tubulation. Interacts with SLC7A9. Interacts with BMX and BTK. Interacts with TGFBR1. Interacts with CAVIN3 (via leucine-zipper domain) in a cholesterol-sensitive manner. Interacts with CAVIN1. Interacts with EHD2 in a cholesterol-dependent manner. Forms a ternary complex with UBXN6 and VCP; mediates CAV1 targeting to lysosomes for degradation. Interacts with ABCG1; this interaction regulates ABCG1-mediated cholesterol efflux. Interacts with NEU3; this interaction enhances NEU3 sialidase activity within caveola. Interacts (via C-terminus) with SPRY1, SPRY2 (via C-terminus), SPRY3, and SPRY4. Interacts with IGFBP5; this interaction allows trafficking of IGFBP5 from the plasma membrane to the nucleus. Post-translationally, phosphorylated at Tyr-14 by ABL1 in response to oxidative stress. Ubiquitinated. Undergo monoubiquitination and multi- and/or polyubiquitination. Monoubiquitination of N-terminal lysines promotes integration in a ternary complex with UBXN6 and VCP which promotes oligomeric CAV1 targeting to lysosomes for degradation. Ubiquitinated by ZNRF1; leading to degradation and modulation of the TLR4-mediated immune response.

Its subcellular location is the golgi apparatus membrane. The protein localises to the cell membrane. It localises to the membrane. The protein resides in the caveola. It is found in the membrane raft. Functionally, may act as a scaffolding protein within caveolar membranes. Forms a stable heterooligomeric complex with CAV2 that targets to lipid rafts and drives caveolae formation. Mediates the recruitment of CAVIN proteins (CAVIN1/2/3/4) to the caveolae. Interacts directly with G-protein alpha subunits and can functionally regulate their activity. Involved in the costimulatory signal essential for T-cell receptor (TCR)-mediated T-cell activation. Its binding to DPP4 induces T-cell proliferation and NF-kappa-B activation in a T-cell receptor/CD3-dependent manner. Recruits CTNNB1 to caveolar membranes and may regulate CTNNB1-mediated signaling through the Wnt pathway. Negatively regulates TGFB1-mediated activation of SMAD2/3 by mediating the internalization of TGFBR1 from membrane rafts leading to its subsequent degradation. Binds 20(S)-hydroxycholesterol (20(S)-OHC). This is Caveolin-1 (CAV1) from Pongo abelii (Sumatran orangutan).